The sequence spans 156 residues: Small ribosomal subunit protein uS7 (156 aa).

It belongs to the universal ribosomal protein uS7 family. Part of the 30S ribosomal subunit. Contacts proteins S9 and S11.

Functionally, one of the primary rRNA binding proteins, it binds directly to 16S rRNA where it nucleates assembly of the head domain of the 30S subunit. Is located at the subunit interface close to the decoding center, probably blocks exit of the E-site tRNA. This is Small ribosomal subunit protein uS7 from Neisseria gonorrhoeae (strain ATCC 700825 / FA 1090).